The chain runs to 507 residues: Transmembrane protein 184 homolog DDB_G0276041 (507 aa).

The next 7 helical transmembrane spans lie at 13–33 (IVMLSIGSFFALGSIIIAVIL), 50–70 (IVRIIMIAPIYAIHSLLSLFF), 88–108 (AYVLYCFFKLLICFLGGEEAL), 141–161 (LGLVLQYAIIKPTLAIVAAIL), 179–199 (LWITVINNISVLIALYFLVMF), 222–242 (VVFFLFWQTVVITVLIWFDAL), and 260–280 (FLVCIEMFITSIAMGICFSYS). N-linked (GlcNAc...) asparagine glycans are attached at residues N360, N375, N470, N473, N477, and N498. Positions 448 to 500 (NGASNNNNNNNNNNNNINNNNNNNSNNSNNNSNSQFESIDINSNSVNSNKNQS) are disordered. A compositionally biased stretch (low complexity) spans 451-500 (SNNNNNNNNNNNNINNNNNNNSNNSNNNSNSQFESIDINSNSVNSNKNQS).

Belongs to the TMEM184 family.

The protein localises to the cell membrane. Functionally, probable transporter. This Dictyostelium discoideum (Social amoeba) protein is Transmembrane protein 184 homolog DDB_G0276041 (tmem184B).